The chain runs to 1365 residues: Homeotic protein spalt-major (1365 aa).

Disordered stretches follow at residues 47–194 (SADK…EVTL), 270–298 (QAKQ…EEEE), and 322–363 (LINA…NTHK). 2 stretches are compositionally biased toward low complexity: residues 63 to 76 (SPLT…SPSR) and 87 to 99 (EQST…PEQS). Over residues 103–117 (HQLENDIKSEAKSEI) the composition is skewed to basic and acidic residues. Residues 146–157 (PSSPVAEASAEE) show a composition bias toward low complexity. Positions 159-181 (ATERTPEKEKEKDVEVDVEKPDE) are enriched in basic and acidic residues. Positions 275-298 (EDTEEDADQEQDQEQETDTYEEEE) are enriched in acidic residues. Positions 346-363 (HDHESQPNRRPSLDNTHK) are enriched in basic and acidic residues. 2 consecutive C2H2-type zinc fingers follow at residues 451 to 473 (HRCR…IRSH) and 479 to 501 (FKCN…FQRH). Disordered regions lie at residues 508–554 (VPMN…ASFP) and 586–716 (ELPT…TPGQ). Over residues 530-539 (MSPTDSSPNH) the composition is skewed to polar residues. Pro residues predominate over residues 540–554 (SPAPPPLGSAPASFP). Composition is skewed to basic and acidic residues over residues 603–622 (PQVK…HEQE) and 638–662 (VRIK…EPRR). Phosphoserine occurs at positions 739 and 744. The segment at 740–772 (PEHHSPVRSPAGGALPPGVPPPPHHHPHHMARS) is disordered. 3 C2H2-type zinc fingers span residues 824–846 (NQCV…YRTH), 852–874 (FKCR…MAVH), and 884–906 (HQCP…IRLH). 3 disordered regions span residues 948–1012 (ALPG…RSGD), 1030–1129 (VVNT…ILTS), and 1146–1241 (HHLQ…GARP). Over residues 976-991 (DMDDNMDCGEDYDDDV) the composition is skewed to acidic residues. The span at 1040 to 1054 (SSASSHGHSVGSTSA) shows a compositional bias: low complexity. The segment covering 1055–1079 (PTSPSVHASSQVIKRSSSPARSEAS) has biased composition (polar residues). 2 positions are modified to phosphoserine: Ser-1076 and Ser-1079. Composition is skewed to low complexity over residues 1085–1100 (LTPR…SRSP), 1114–1123 (RSPSGSSHAS), and 1146–1168 (HHLQ…AAAA). Residues 1181 to 1191 (QHQEQLRREAA) show a composition bias toward basic and acidic residues. Residues 1192–1218 (EAQQKAAAAAAAAAAAAAAQRQTPPQA) are compositionally biased toward low complexity. 2 consecutive C2H2-type zinc fingers follow at residues 1289–1311 (TTCG…YRSH) and 1317–1339 (FKCS…MLTH).

Belongs to the sal C2H2-type zinc-finger protein family.

Its subcellular location is the nucleus. In terms of biological role, required for the establishment of the posterior-most head and the anterior-most tail segments of the embryo. Probably function as a transcriptional regulator. Could repress the transcription of the tsh gene. The chain is Homeotic protein spalt-major (salm) from Drosophila melanogaster (Fruit fly).